Here is a 440-residue protein sequence, read N- to C-terminus: Chromosome partition protein MukF (440 aa).

The segment at 208 to 236 is leucine-zipper; the sequence is LSETSGTLRELQDTLEAAGDKLQANLLRI.

Belongs to the MukF family. Interacts, and probably forms a ternary complex, with MukE and MukB via its C-terminal region. The complex formation is stimulated by calcium or magnesium. It is required for an interaction between MukE and MukB.

It localises to the cytoplasm. Its subcellular location is the nucleoid. Its function is as follows. Involved in chromosome condensation, segregation and cell cycle progression. May participate in facilitating chromosome segregation by condensation DNA from both sides of a centrally located replisome during cell division. Not required for mini-F plasmid partitioning. Probably acts via its interaction with MukB and MukE. Overexpression results in anucleate cells. It has a calcium binding activity. The polypeptide is Chromosome partition protein MukF (Salmonella agona (strain SL483)).